The following is a 237-amino-acid chain: Ribonuclease PH (237 aa).

Residues arginine 86 and 124–126 (GTR) contribute to the phosphate site.

It belongs to the RNase PH family. In terms of assembly, homohexameric ring arranged as a trimer of dimers.

It carries out the reaction tRNA(n+1) + phosphate = tRNA(n) + a ribonucleoside 5'-diphosphate. In terms of biological role, phosphorolytic 3'-5' exoribonuclease that plays an important role in tRNA 3'-end maturation. Removes nucleotide residues following the 3'-CCA terminus of tRNAs; can also add nucleotides to the ends of RNA molecules by using nucleoside diphosphates as substrates, but this may not be physiologically important. Probably plays a role in initiation of 16S rRNA degradation (leading to ribosome degradation) during starvation. The sequence is that of Ribonuclease PH from Pseudoalteromonas translucida (strain TAC 125).